Consider the following 733-residue polypeptide: uncharacterized protein (733 aa).

A helical transmembrane segment spans residues 174–194 (WAVMILASLRPELFGPIIIAG).

The protein localises to the membrane. This is an uncharacterized protein from Rhizobium meliloti (Ensifer meliloti).